The following is a 139-amino-acid chain: MHEWALADAIVRTVLEHAQKENASKVLAVKVVLGELQDVDAKIVEFAMNELFKGTIAEGAEIIFEEEEAVFKCRNCGYEWRLSEVREKLDERMREDIHFIPEVVHAFLSCPRCGSHDFEVVKGRGVYIAGIKIEKEGEQ.

A Ni(2+)-binding site is contributed by His-2. Cys-73, Cys-76, Cys-110, and Cys-113 together coordinate Zn(2+).

The protein belongs to the HypA/HybF family.

Functionally, involved in the maturation of [NiFe] hydrogenases. Required for nickel insertion into the metal center of the hydrogenase. This chain is Hydrogenase maturation factor HypA, found in Pyrococcus horikoshii (strain ATCC 700860 / DSM 12428 / JCM 9974 / NBRC 100139 / OT-3).